A 134-amino-acid polypeptide reads, in one-letter code: GSH-induced LITAF domain protein (134 aa).

Positions 33-113 (DPLGAPIQQT…CGNKVADFEK (81 aa)) constitute an LITAF domain. C53 and C56 together coordinate Zn(2+). Residues 68–88 (PGVAAVVACMMPFMLGFCFLC) are membrane-binding amphipathic helix. Positions 101 and 104 each coordinate Zn(2+).

Belongs to the CDIP1/LITAF family. As to quaternary structure, interacts (via N- and C-terminal) with MIEL1 and LSD1 (via N-terminus).

It localises to the cell membrane. Its function is as follows. Acts as a membrane anchor, bringing other regulators of programmed cell death (PCD) to the plasma membrane. Negatively regulates hypersensitive cell death. The protein is GSH-induced LITAF domain protein of Arabidopsis thaliana (Mouse-ear cress).